The sequence spans 865 residues: Bifunctional uridylyltransferase/uridylyl-removing enzyme (865 aa).

Positions Met1–Leu318 are uridylyltransferase. Residues Ile319–Leu675 form a uridylyl-removing region. The HD domain maps to Val437–Leu559. ACT domains follow at residues Gln676–His762 and Arg789–Ala865. The tract at residues Asp747–Arg767 is disordered. Residues Ala751–Arg767 show a composition bias toward basic residues.

This sequence belongs to the GlnD family. Mg(2+) serves as cofactor.

It catalyses the reaction [protein-PII]-L-tyrosine + UTP = [protein-PII]-uridylyl-L-tyrosine + diphosphate. It carries out the reaction [protein-PII]-uridylyl-L-tyrosine + H2O = [protein-PII]-L-tyrosine + UMP + H(+). Uridylyltransferase (UTase) activity is inhibited by glutamine, while glutamine activates uridylyl-removing (UR) activity. In terms of biological role, modifies, by uridylylation and deuridylylation, the PII regulatory proteins (GlnB and homologs), in response to the nitrogen status of the cell that GlnD senses through the glutamine level. Under low glutamine levels, catalyzes the conversion of the PII proteins and UTP to PII-UMP and PPi, while under higher glutamine levels, GlnD hydrolyzes PII-UMP to PII and UMP (deuridylylation). Thus, controls uridylylation state and activity of the PII proteins, and plays an important role in the regulation of nitrogen assimilation and metabolism. This chain is Bifunctional uridylyltransferase/uridylyl-removing enzyme, found in Bordetella parapertussis (strain 12822 / ATCC BAA-587 / NCTC 13253).